The sequence spans 178 residues: Interleukin-10 (178 aa).

The signal sequence occupies residues 1–18 (MHSSALLCCLVFLTGVRA). Intrachain disulfides connect C30–C126 and C80–C132. N-linked (GlcNAc...) asparagine glycosylation is present at N134.

Belongs to the IL-10 family. As to quaternary structure, homodimer. Interacts with IL10RA and IL10RB.

It is found in the secreted. Functionally, major immune regulatory cytokine that acts on many cells of the immune system where it has profound anti-inflammatory functions, limiting excessive tissue disruption caused by inflammation. Mechanistically, IL10 binds to its heterotetrameric receptor comprising IL10RA and IL10RB leading to JAK1 and STAT2-mediated phosphorylation of STAT3. In turn, STAT3 translocates to the nucleus where it drives expression of anti-inflammatory mediators. Targets antigen-presenting cells (APCs) such as macrophages and monocytes and inhibits their release of pro-inflammatory cytokines including granulocyte-macrophage colony-stimulating factor /GM-CSF, granulocyte colony-stimulating factor/G-CSF, IL-1 alpha, IL-1 beta, IL-6, IL-8 and TNF-alpha. Also interferes with antigen presentation by reducing the expression of MHC-class II and co-stimulatory molecules, thereby inhibiting their ability to induce T cell activation. In addition, controls the inflammatory response of macrophages by reprogramming essential metabolic pathways including mTOR signaling. The chain is Interleukin-10 (IL10) from Callithrix jacchus (White-tufted-ear marmoset).